The chain runs to 396 residues: MAKAKFERTKPHCNIGTIGHVDHGKTSLTAAITKTLAKTGGATFKAYDQIDAAPEERARGITISTAHVEYETAKRHYAHVDCPGHADYVKNMITGAAQMDGAILVVSAADGPMPQTREHILLARQVGVPALVVFLNKVDQVDDPELLELVEMEVRELLSAYQFPGDDIPIIKGSALVTLEDGDPEVGENRVRDLMDAVDAYIPQPERPVDRPFLMPIEDVFSISGRGTVVTGRVERGVVNVGDEIEIVGLRATQKTTVTGVEMFRKLLDRGEAGDNIGALVRGTKREDVERGQVLAKPGSITPHTKFKAEAYILTKEEGGRHTPFFTNYRPQFYFRTTDVTGVVHLPEGTEMVMPGDNIAMDVELIAPIAMDEGLRFAIREGGRTVGAGVVASITA.

Residues 10 to 206 (KPHCNIGTIG…AVDAYIPQPE (197 aa)) form the tr-type G domain. The tract at residues 19–26 (GHVDHGKT) is G1. 19–26 (GHVDHGKT) is a binding site for GTP. Thr-26 serves as a coordination point for Mg(2+). The interval 60 to 64 (GITIS) is G2. Residues 81 to 84 (DCPG) are G3. GTP contacts are provided by residues 81–85 (DCPGH) and 136–139 (NKVD). The tract at residues 136-139 (NKVD) is G4. The tract at residues 174-176 (SAL) is G5.

Belongs to the TRAFAC class translation factor GTPase superfamily. Classic translation factor GTPase family. EF-Tu/EF-1A subfamily. As to quaternary structure, monomer.

Its subcellular location is the cytoplasm. The catalysed reaction is GTP + H2O = GDP + phosphate + H(+). GTP hydrolase that promotes the GTP-dependent binding of aminoacyl-tRNA to the A-site of ribosomes during protein biosynthesis. In Gluconacetobacter diazotrophicus (strain ATCC 49037 / DSM 5601 / CCUG 37298 / CIP 103539 / LMG 7603 / PAl5), this protein is Elongation factor Tu.